A 377-amino-acid chain; its full sequence is MRVLVLGAGQLARMMSLAGAPLNIETIAFDVGSENIVHPLTQTVLGHGLEQAIEQVDVITAEFEHIPHPILDLCARSGKLYPSAEAIKAGGDRRLEKALLDRAQVANARYTMIRSRDDLTSAIAEIGLPMVLKSALGGYDGKGQWRLKEPTQIESVWQELAQYLAANPEQAIVAEEFVAFDREVSLVGARNLVGDVVVYPLAENVHTQGVLSLSTAIDAPALQTQAKAMFKAVAEQLNYVGVLALEFFEVQGQLLVNEIAPRVHNSGHWTQQGAETCQFENHLRAVCGLPLGSTKLVRETAMINILGEDQLPAEVLALEGCHVHWYGKAKRSGRKMGHINVTADYSGELQRKLCQLATVLDEKAFPAVHAVAKEIQP.

ATP contacts are provided by residues R93, K133, 138-144, 175-178, E183, H206, and 257-258; these read GYDGKGQ, EEFV, and NE. The region spanning 97-287 is the ATP-grasp domain; that stretch reads KALLDRAQVA…QFENHLRAVC (191 aa).

This sequence belongs to the PurK/PurT family. In terms of assembly, homodimer.

The enzyme catalyses 5-amino-1-(5-phospho-beta-D-ribosyl)imidazole + hydrogencarbonate + ATP = 5-carboxyamino-1-(5-phospho-D-ribosyl)imidazole + ADP + phosphate + 2 H(+). It participates in purine metabolism; IMP biosynthesis via de novo pathway; 5-amino-1-(5-phospho-D-ribosyl)imidazole-4-carboxylate from 5-amino-1-(5-phospho-D-ribosyl)imidazole (N5-CAIR route): step 1/2. In terms of biological role, catalyzes the ATP-dependent conversion of 5-aminoimidazole ribonucleotide (AIR) and HCO(3)(-) to N5-carboxyaminoimidazole ribonucleotide (N5-CAIR). The sequence is that of N5-carboxyaminoimidazole ribonucleotide synthase from Vibrio cholerae serotype O1 (strain ATCC 39315 / El Tor Inaba N16961).